A 198-amino-acid polypeptide reads, in one-letter code: Recombination protein RecR (198 aa).

The C4-type zinc-finger motif lies at 57 to 72 (CEKCNTFTEAQICEVC). One can recognise a Toprim domain in the interval 80-175 (TLLCVVETPA…AVTRLARGVP (96 aa)).

This sequence belongs to the RecR family.

May play a role in DNA repair. It seems to be involved in an RecBC-independent recombinational process of DNA repair. It may act with RecF and RecO. The protein is Recombination protein RecR of Burkholderia cenocepacia (strain HI2424).